The following is a 37-amino-acid chain: Large ribosomal subunit protein bL36 (37 aa).

The protein belongs to the bacterial ribosomal protein bL36 family.

The polypeptide is Large ribosomal subunit protein bL36 (Pasteurella multocida (strain Pm70)).